Reading from the N-terminus, the 152-residue chain is MAKRVKVVLKEDILSLGKDGDVVEVAPGYARNFLLSQQKALAVTPSVLKQVEYRLAKKAELEAAKKQEAIDFETALKTIGRFSIKKQTGEDGVLFGTVTNGDVSEAIQLATQKEIDRRNIIVPEIHETGKYKVQVKLHSEVTAEINLEVIGN.

It belongs to the bacterial ribosomal protein bL9 family.

In terms of biological role, binds to the 23S rRNA. This chain is Large ribosomal subunit protein bL9, found in Prochlorococcus marinus (strain SARG / CCMP1375 / SS120).